The chain runs to 164 residues: UPF0303 protein R02983 (164 aa).

This sequence belongs to the UPF0303 family.

The protein is UPF0303 protein R02983 of Rhizobium meliloti (strain 1021) (Ensifer meliloti).